We begin with the raw amino-acid sequence, 334 residues long: Formamidase (334 aa).

The region spanning 14–260 (FLVAAIQFPV…WEIVTGEIYP (247 aa)) is the CN hydrolase domain. Residue Glu-60 is the Proton acceptor of the active site. Lys-133 serves as the catalytic Proton donor. Cys-166 acts as the Nucleophile in catalysis.

This sequence belongs to the carbon-nitrogen hydrolase superfamily. Aliphatic amidase family.

The enzyme catalyses formamide + H2O = formate + NH4(+). Functionally, is an aliphatic amidase with a restricted substrate specificity, as it only hydrolyzes formamide. This Helicobacter pylori (strain Shi470) protein is Formamidase.